Reading from the N-terminus, the 156-residue chain is MKIALSFLFLTSTFSNAGKIGRLQSVAVSGQLNCLGKPAVGVRIDLMESDNNGEETGIIDDNDFMGYTYTDSAGFFNMSGSEVEISGIEPYVNIFHKCNDGLSPCQRQLRVDIPKSATASGPAPNETFSIGTLELSSRKVIGERRSCAYRNLTQTS.

Positions 1–17 are cleaved as a signal peptide; it reads MKIALSFLFLTSTFSNA. An N-linked (GlcNAc...) asparagine glycan is attached at Asn-151.

The protein belongs to the nematode transthyretin-like family.

It localises to the secreted. The protein is Transthyretin-like protein 1 (ttr-1) of Caenorhabditis elegans.